Consider the following 219-residue polypeptide: Membrin-12 (219 aa).

Alanine 2 is modified (N-acetylalanine). Residues 2 to 197 lie on the Cytoplasmic side of the membrane; that stretch reads ASGTVGGLSE…LIERRNRVDT (196 aa). The helical; Anchor for type IV membrane protein transmembrane segment at 198–215 threads the bilayer; it reads WIKYAGMIATLVILYLFI. Residues 216 to 219 lie on the Vesicular side of the membrane; the sequence is RWTR.

This sequence belongs to the GOSR2 family.

The protein localises to the golgi apparatus membrane. Involved in transport of proteins from the cis/medial-Golgi to the trans-Golgi network. The polypeptide is Membrin-12 (MEMB12) (Arabidopsis thaliana (Mouse-ear cress)).